The primary structure comprises 383 residues: 1-deoxy-D-xylulose 5-phosphate reductoisomerase (383 aa).

NADPH-binding residues include T10, G11, S12, I13, G36, R37, N38, and N122. A 1-deoxy-D-xylulose 5-phosphate-binding site is contributed by K123. E124 lines the NADPH pocket. A Mn(2+)-binding site is contributed by D148. 4 residues coordinate 1-deoxy-D-xylulose 5-phosphate: S149, E150, S174, and H197. Residue E150 participates in Mn(2+) binding. NADPH is bound at residue G203. Residues S210, N215, K216, and E219 each contribute to the 1-deoxy-D-xylulose 5-phosphate site. E219 contacts Mn(2+).

This sequence belongs to the DXR family. Mg(2+) serves as cofactor. It depends on Mn(2+) as a cofactor.

It catalyses the reaction 2-C-methyl-D-erythritol 4-phosphate + NADP(+) = 1-deoxy-D-xylulose 5-phosphate + NADPH + H(+). It participates in isoprenoid biosynthesis; isopentenyl diphosphate biosynthesis via DXP pathway; isopentenyl diphosphate from 1-deoxy-D-xylulose 5-phosphate: step 1/6. Catalyzes the NADPH-dependent rearrangement and reduction of 1-deoxy-D-xylulose-5-phosphate (DXP) to 2-C-methyl-D-erythritol 4-phosphate (MEP). The sequence is that of 1-deoxy-D-xylulose 5-phosphate reductoisomerase from Bacillus pumilus (strain SAFR-032).